Reading from the N-terminus, the 473-residue chain is Ribulose bisphosphate carboxylase large chain (473 aa).

2 residues coordinate substrate: N116 and T166. K168 acts as the Proton acceptor in catalysis. K170 lines the substrate pocket. Mg(2+) contacts are provided by K194, D196, and E197. Residue K194 is modified to N6-carboxylysine. The active-site Proton acceptor is the H287. Substrate-binding residues include R288, H320, and S372.

The protein belongs to the RuBisCO large chain family. Type I subfamily. As to quaternary structure, heterohexadecamer of 8 large chains and 8 small chains. Mg(2+) serves as cofactor.

The catalysed reaction is 2 (2R)-3-phosphoglycerate + 2 H(+) = D-ribulose 1,5-bisphosphate + CO2 + H2O. The enzyme catalyses D-ribulose 1,5-bisphosphate + O2 = 2-phosphoglycolate + (2R)-3-phosphoglycerate + 2 H(+). Functionally, ruBisCO catalyzes two reactions: the carboxylation of D-ribulose 1,5-bisphosphate, the primary event in carbon dioxide fixation, as well as the oxidative fragmentation of the pentose substrate. Both reactions occur simultaneously and in competition at the same active site. The protein is Ribulose bisphosphate carboxylase large chain of Nitrosomonas europaea (strain ATCC 19718 / CIP 103999 / KCTC 2705 / NBRC 14298).